The sequence spans 88 residues: uncharacterized protein (88 aa).

The first 22 residues, 1–22 (MLKASILFITISLTLMLENSYG), serve as a signal peptide directing secretion. 3 disulfide bridges follow: cysteine 59/cysteine 73, cysteine 66/cysteine 77, and cysteine 72/cysteine 82.

It is found in the secreted. This is an uncharacterized protein from Schistosoma japonicum (Blood fluke).